Reading from the N-terminus, the 381-residue chain is Beta-1,4-galactosyltransferase 5 (381 aa).

Topologically, residues Met1 to Ser11 are cytoplasmic. A helical; Signal-anchor for type II membrane protein transmembrane segment spans residues Phe12–Ala32. The Lumenal portion of the chain corresponds to Pro33–Tyr381. Asn73, Asn82, and Asn120 each carry an N-linked (GlcNAc...) asparagine glycan. Cys106 and Cys151 are disulfide-bonded. Residues Pro162–Arg166, Phe201–Arg203, Val228–Asp229, Tyr257, and Trp289 each bind UDP-alpha-D-galactose. Cys222 and Cys241 are disulfide-bonded. Asp229 contacts Mn(2+). Residue Gly291–Asp294 participates in N-acetyl-D-glucosamine binding. His322 lines the Mn(2+) pocket. Residue His322–His323 coordinates UDP-alpha-D-galactose. Residue Arg333 coordinates N-acetyl-D-glucosamine. An N-linked (GlcNAc...) asparagine glycan is attached at Asn366.

The protein belongs to the glycosyltransferase 7 family. Mn(2+) serves as cofactor.

The protein resides in the golgi apparatus. Its subcellular location is the golgi stack membrane. The catalysed reaction is a beta-D-glucosyl-(1&lt;-&gt;1')-N-acylsphing-4-enine + UDP-alpha-D-galactose = a beta-D-Gal-(1-&gt;4)-beta-D-Glc-(1&lt;-&gt;1)-Cer(d18:1(4E)) + UDP + H(+). Its pathway is protein modification; protein glycosylation. It functions in the pathway sphingolipid metabolism. Its function is as follows. Catalyzes the synthesis of lactosylceramide (LacCer) via the transfer of galactose from UDP-galactose to glucosylceramide (GlcCer). Required for proper patterning of the dorsoventral axis during embryogenesis through the regulation of BMP signaling. Plays a role in proteoglycan glycosylation that is required for BMP-dependent specification of the dorsoventral axis. This Danio rerio (Zebrafish) protein is Beta-1,4-galactosyltransferase 5 (b4galt5).